Reading from the N-terminus, the 314-residue chain is UDP-glucose 4-epimerase (314 aa).

NAD(+) is bound by residues 11 to 12, 31 to 36, 56 to 57, and 77 to 81; these read FI, DNFATG, DI, and LAAQI. Positions 121 and 146 each coordinate substrate. Positions 146 and 150 each coordinate NAD(+). Tyr-146 serves as the catalytic Proton acceptor. Residues Asn-175, 189–190, 204–206, Arg-213, and 271–274 contribute to the substrate site; these read VV, RVF, and RLGD.

The protein belongs to the NAD(P)-dependent epimerase/dehydratase family. In terms of assembly, homodimer. It depends on NAD(+) as a cofactor.

The catalysed reaction is UDP-alpha-D-glucose = UDP-alpha-D-galactose. It functions in the pathway carbohydrate metabolism; galactose metabolism. Involved in the metabolism of galactose. Catalyzes the conversion of UDP-galactose (UDP-Gal) to UDP-glucose (UDP-Glc) through a mechanism involving the transient reduction of NAD. The sequence is that of UDP-glucose 4-epimerase (galE1) from Mycobacterium tuberculosis (strain CDC 1551 / Oshkosh).